A 441-amino-acid chain; its full sequence is Divalent metal cation transporter MntH (441 aa).

11 consecutive transmembrane segments (helical) span residues 41–61 (TGIA…IGYM), 74–94 (AAYG…AMLF), 116–136 (HFPA…AMAT), 141–161 (FLGG…AGMI), 183–203 (AAIA…LMIA), 223–243 (AALT…TLYL), 271–291 (VVVA…MAAS), 311–331 (IPVL…TSGV), 360–380 (AVTI…TRAM), 381–401 (VASQ…LLIL), and 419–439 (IVAG…VWAA).

It belongs to the NRAMP family.

It localises to the cell inner membrane. Its function is as follows. H(+)-stimulated, divalent metal cation uptake system. This is Divalent metal cation transporter MntH from Burkholderia ambifaria (strain ATCC BAA-244 / DSM 16087 / CCUG 44356 / LMG 19182 / AMMD) (Burkholderia cepacia (strain AMMD)).